The following is a 547-amino-acid chain: Carboxypeptidase N subunit 2 (547 aa).

The signal sequence occupies residues 1–21; it reads MFPGAWLCWVSLLLLARLTQP. Residues 22 to 49 enclose the LRRNT domain; the sequence is CPVGCDCFGREVFCSDEQLADIPPDIPP. Asn74, Asn111, and Asn119 each carry an N-linked (GlcNAc...) asparagine glycan. 12 LRR repeats span residues 98 to 119, 122 to 143, 146 to 167, 170 to 191, 194 to 215, 218 to 239, 242 to 263, 266 to 287, 290 to 311, 314 to 335, 338 to 359, and 362 to 383; these read RLQD…IFSN, SLEK…LFCH, ILES…LFQS, DLRT…AFQS, GLQM…ALGS, SLQE…LFSQ, SLEM…LFSS, NLTF…LFAH, GLLH…AFTN, RLVS…VFRN, QLVK…LFHN, and RLQL…IFDT. Residues Asn266 and Asn311 are each glycosylated (N-linked (GlcNAc...) asparagine). Asn348, Asn359, and Asn367 each carry an N-linked (GlcNAc...) asparagine glycan. An LRRCT domain is found at 395–447; the sequence is NPWQCDCHLSYLTSWLRLYNNQISNTHTFCAGPAYLKGQLVPNLKQEQLICPV. N-linked (GlcNAc...) asparagine glycosylation occurs at Asn520.

As to quaternary structure, tetramer of two catalytic chains and two glycosylated inactive chains.

The protein resides in the secreted. Its function is as follows. The 83 kDa subunit binds and stabilizes the catalytic subunit at 37 degrees Celsius and keeps it in circulation. Under some circumstances it may be an allosteric modifier of the catalytic subunit. The polypeptide is Carboxypeptidase N subunit 2 (Cpn2) (Mus musculus (Mouse)).